The sequence spans 247 residues: tRNA (guanine-N(1)-)-methyltransferase (247 aa).

S-adenosyl-L-methionine is bound by residues Gly-112 and 131 to 136 (LGDFVL).

It belongs to the RNA methyltransferase TrmD family. In terms of assembly, homodimer.

The protein resides in the cytoplasm. It carries out the reaction guanosine(37) in tRNA + S-adenosyl-L-methionine = N(1)-methylguanosine(37) in tRNA + S-adenosyl-L-homocysteine + H(+). Functionally, specifically methylates guanosine-37 in various tRNAs. This chain is tRNA (guanine-N(1)-)-methyltransferase, found in Syntrophotalea carbinolica (strain DSM 2380 / NBRC 103641 / GraBd1) (Pelobacter carbinolicus).